We begin with the raw amino-acid sequence, 421 residues long: Synaptotagmin-15 (421 aa).

At 1 to 4 (MAEQ) the chain is on the extracellular side. Residues 5-29 (LALVIGGTIGGLLLLLLIGASCCLW) traverse the membrane as a helical; Signal-anchor for type III membrane protein segment. Topologically, residues 30–421 (RRFCATLTYE…WHALCRTTEP (392 aa)) are cytoplasmic. Residues 47-68 (MATTAASSGQRDRPCQPHARTQ) are disordered. C2 domains lie at 147–264 (CLGR…RRVI) and 278–399 (EFGD…EHWD).

This sequence belongs to the synaptotagmin family. As to quaternary structure, homodimer.

It is found in the cell membrane. In terms of biological role, may be involved in the trafficking and exocytosis of secretory vesicles in non-neuronal tissues. This is Synaptotagmin-15 (SYT15) from Homo sapiens (Human).